Consider the following 833-residue polypeptide: Urease (833 aa).

The Urease domain maps to 395–833; that stretch reads GALDVHVHYI…LPLTRRYFVY (439 aa). Ni(2+) is bound by residues His400 and His402. His402 and Ala433 together coordinate urea. Lys483 serves as a coordination point for Ni(2+). Lys483 carries the N6-carboxylysine modification. 2 residues coordinate urea: His485 and His512. Positions 512 and 538 each coordinate Ni(2+). The Proton donor role is filled by His586. Asp626 contributes to the Ni(2+) binding site. Ala629 serves as a coordination point for urea.

The protein in the C-terminal section; belongs to the metallo-dependent hydrolases superfamily. Urease alpha subunit family. Homohexamer. Ni(2+) is required as a cofactor. Post-translationally, carboxylation allows a single lysine to coordinate two nickel ions.

The enzyme catalyses urea + 2 H2O + H(+) = hydrogencarbonate + 2 NH4(+). It functions in the pathway nitrogen metabolism; urea degradation; CO(2) and NH(3) from urea (urease route): step 1/1. With respect to regulation, the urease accessory proteins URE4, URE6 and URE7 are required for urease activity, URE7 supplying nickel for the functional urease. Functionally, plays a nutritional role via nitrogen acquisition in the environment. Contributes to the central nervous system invasion by enhancing yeast sequestration within microcapillary beds (such as within the brain) during hematogenous spread, thereby facilitating blood-to-brain invasion by C.neoformans. Affects fitness within the mammalian phagosome, promoting non-lytic exocytosis while delaying intracellular replication and thus reducing phagolysosomal membrane damage, events that could facilitate cryptococcal dissemination when transported inside macrophages. Urease activity is also associated with the regulation of key intracellular metabolic pathways, including melanin biosynthesis, polyamine biosynthesis, as well as intracellular levels of proline and reactive oxygen species. This is Urease from Cryptococcus neoformans var. grubii serotype A (strain H99 / ATCC 208821 / CBS 10515 / FGSC 9487) (Filobasidiella neoformans var. grubii).